The following is an 810-amino-acid chain: MAATKSEPLDLDLTAEEARAEYARLSDAILEADRLYYQEDAPEISDAEYDRLRRRLEDIEARFPDLAGTGAASTSVGAKPSEKFAKVRHAVPMLSLGNAFDDAEVAEFVARVRRFLGWSDDTPLAFTAEPKIDGLSLSLRYVNGRLDTAATRGDGEVGENVTANARTVQDIPAVLAGAGWPEICEVRGEVYLSHADFAAINARQEAAGKPLFANPRNAAAGSLRQLDPAITASRPLRFFAYAWGELSAPIAETQTGVLEQFATWGLPVNPRTETFTDTAAMLAHYRRIEADRAGLGYDIDGVVYKVDDLALQKRLGFVSRSPRWALAHKFAAQEATTVVEDIVINVGRTGSLNPLAKLRPVTVGGVVVSNATLHNEGYVKGVGADGEPIRDGRDIRVGDTVTVVRAGDVIPKVMDVDLTKRPADSRPYAFPESCPACGSRAVRAINPRTGRPDAVRRCTGGLICPAQGVERMKHFVSRNGFDIEGFGETYIEVLFEAGLVRQPADLFRLDFEELKAAIVARREALSAERRAESGTAEPPKKAAKKKGDEDDKAIKNLLAAVEARRAVPMNRLLFALGIPQIGEATAKALAKRFADMPTLIAAIREAAAAQPGPDWVELTAVPRVGGTTRDRLLDLGFPEDDAAPAKERARLSAVQRENLLAHYGDVDAVRAAIAQAAAQRPGDAYRVFADDGEIGPVATDALLLFFSEPHNADAVTALLDAVAVQPMERAAAASTFAGKTVVFTGALEKMTRNEAKAVAERLGAKVSGSVSAKTDLVVAGPGAGSKLKDAQKHGVRVVSEDDWLAMVAQG.

Residues 46–50 (DAEYD), 95–96 (SL), and E129 each bind NAD(+). K131 serves as the catalytic N6-AMP-lysine intermediate. Residues R152, E189, K305, and K329 each coordinate NAD(+). Zn(2+) is bound by residues C434, C437, C458, and C464. The disordered stretch occupies residues 528–548 (ERRAESGTAEPPKKAAKKKGD). The 80-residue stretch at 731-810 (AAASTFAGKT…DDWLAMVAQG (80 aa)) folds into the BRCT domain.

This sequence belongs to the NAD-dependent DNA ligase family. LigA subfamily. The cofactor is Mg(2+). It depends on Mn(2+) as a cofactor.

It carries out the reaction NAD(+) + (deoxyribonucleotide)n-3'-hydroxyl + 5'-phospho-(deoxyribonucleotide)m = (deoxyribonucleotide)n+m + AMP + beta-nicotinamide D-nucleotide.. DNA ligase that catalyzes the formation of phosphodiester linkages between 5'-phosphoryl and 3'-hydroxyl groups in double-stranded DNA using NAD as a coenzyme and as the energy source for the reaction. It is essential for DNA replication and repair of damaged DNA. This chain is DNA ligase, found in Methylobacterium radiotolerans (strain ATCC 27329 / DSM 1819 / JCM 2831 / NBRC 15690 / NCIMB 10815 / 0-1).